The sequence spans 266 residues: Secreted RxLR effector protein 128 (266 aa).

The N-terminal stretch at 1 to 18 (MRGAFYTAIALLIGRSQT) is a signal peptide. The RxLR-dEER signature appears at 48–63 (RYLRDGLAHSATNEER).

This sequence belongs to the RxLR effector family.

It localises to the secreted. The protein localises to the host nucleus. In terms of biological role, secreted effector that dos not suppress the host cell death induced by cell death-inducing proteins. The polypeptide is Secreted RxLR effector protein 128 (Plasmopara viticola (Downy mildew of grapevine)).